A 305-amino-acid polypeptide reads, in one-letter code: Probable cell division protein WhiA (305 aa).

A DNA-binding region (H-T-H motif) is located at residues 269–302 (TIKELGELLEPSLGKSGVNHRLRKLVEQANELRK).

It belongs to the WhiA family.

Involved in cell division and chromosome segregation. This chain is Probable cell division protein WhiA, found in Lactococcus lactis subsp. lactis (strain IL1403) (Streptococcus lactis).